The chain runs to 591 residues: Solute carrier family 40 member 2, chloroplastic (591 aa).

A chloroplast-targeting transit peptide spans 1–66 (MGMVTATAAA…RCYITNVEVD (66 aa)). Transmembrane regions (helical) follow at residues 159 to 179 (WPAA…VGFF), 206 to 226 (GLNA…IYAM), 242 to 262 (WFIA…ALGV), 293 to 313 (LVCE…YHPV), 318 to 338 (IACG…QLIN), 391 to 411 (VATV…MTAL), 419 to 439 (PSIV…ATFI), 452 to 472 (AGAA…VVYW), 482 to 502 (LLIF…YDVV), 518 to 540 (LIGG…MAII), and 547 to 569 (FGFL…CQWL).

It belongs to the ferroportin (FP) (TC 2.A.100) family. SLC40A subfamily.

Its subcellular location is the membrane. It is found in the plastid. It localises to the chloroplast envelope. Functionally, may be involved in iron transport and iron homeostasis. This chain is Solute carrier family 40 member 2, chloroplastic, found in Oryza sativa subsp. japonica (Rice).